A 488-amino-acid polypeptide reads, in one-letter code: UL37 immediate early glycoprotein (488 aa).

A signal peptide spans 1-22; it reads MSPVYVNLLGSVGLLAFWYFSY. Over residues 83–107 the composition is skewed to acidic residues; the sequence is GEESVTEDTEREDTEEEREDEEEEN. The tract at residues 83-119 is disordered; the sequence is GEESVTEDTEREDTEEEREDEEEENEARTPEVNPMDA. Residues asparagine 206, asparagine 210, asparagine 219, asparagine 223, asparagine 242, asparagine 275, asparagine 281, asparagine 294, asparagine 297, asparagine 306, asparagine 333, asparagine 337, asparagine 343, asparagine 384, and asparagine 391 are each glycosylated (N-linked (GlcNAc...) asparagine; by host). A helical transmembrane segment spans residues 439-459; the sequence is ICTVAAGSIALLSLFCILLIG.

It belongs to the immediate early glycoprotein family. Interacts with host BAX. Interacts with host RSAD2/viperin; this interaction results in RSAD2/viperin relocalization from the endoplasmic reticulum to the mitochondria, actin cytoskeleton disruption and enhancement of infection. Interacts with host PEX19; this interaction inhibits the peroxisomal-dependent antiviral signaling. Interacts with host CHCHD6; this interaction rewires mitochondria by engaging the conserved MICOS complex.

It is found in the host membrane. Its subcellular location is the host endoplasmic reticulum membrane. The protein localises to the host Golgi apparatus membrane. The protein resides in the host mitochondrion membrane. It localises to the host peroxisome. Its function is as follows. Multifunctional transmembrane protein that plays several key roles in viral replication. Rapidely traffics from the host endoplasmic reticulum to the outer mitochondrial membrane where it acts to inhibit host immune response, block apoptotic signaling, regulate calcium flux, and induce mitochondrial fragmentation. Sequesters proapoptotic BAX at the outer mitochondrial membrane and prevents cytochrome c release and subsequent initiation of the proapoptotic cascade. Also provoques a calcium efflux from host endoplasmic reticulum and F-actin cytoskeleton disruption. Participates in the increase of host mitochondrial biogenesis, thus promoting viral replication by efficient use of newly made mitochondria. Additionally, a subset of vMIA localizes to peroxisomes, causing fragmentation and blocking peroxisomal MAVS signaling. Mechanistically, inhibits host MAVS oligomerization at peroxisomes in a mitochondrial fission factors (MFF)-dependent manner and in mitochondria independently of mitochondrial fission factors. Plays an essential role in the trafficking of host viperin/RSAD2 from the endoplasmic reticulum to the viral assembly compartment via the mitochondria during viral infection as failure of viperin to localize to the mitochondria results in insufficient lipogenesis and thus reduces viral replication. In terms of biological role, may play a role in escape from the host antiviral response. This chain is UL37 immediate early glycoprotein (UL37), found in Homo sapiens (Human).